The following is a 140-amino-acid chain: MVRKKLWVMQNKAIFYCGTNGSGKSTLRSFNQDAVQIVIDSDHIAMQINPQNPRLADIDAGRKAIGLFHFAIKQHIGFPMESTLSGNSIIQRMKTAKENGFYVHLNYIGINRVEINLARIKARVKSGGHFIAEDIVKYRY.

Residue 18 to 25 participates in ATP binding; the sequence is GTNGSGKS.

This is an uncharacterized protein from Haemophilus influenzae (strain ATCC 51907 / DSM 11121 / KW20 / Rd).